The sequence spans 207 residues: Protein lin-7 homolog B (207 aa).

The Kinase interacting site motif lies at 1–13; that stretch reads MAALVEPLGLERD. An L27 domain is found at 10-65; sequence LERDVSRAVELLERLQRSGELPPQKLQALQRVLQSRFCSAIREVYEQLYDTLDITG. In terms of domain architecture, PDZ spans 93–175; the sequence is VVELPKTDEG…SVKLVVRYTP (83 aa). Residues 187 to 207 are disordered; that stretch reads KMRSARRRQQHQSYSSLESRG. The segment covering 197–207 has biased composition (polar residues); the sequence is HQSYSSLESRG.

This sequence belongs to the lin-7 family. As to quaternary structure, forms a complex with CASK and CASKIN1. Component of the brain-specific heterotrimeric complex (LIN-10-LIN-2-LIN-7 complex) composed of at least APBA1, CASK, and LIN7, which associates with the motor protein KIF17 to transport vesicles along microtubules. Forms a heterotrimeric complex composed of MMP5, LIN7B and PATJ; the N-terminal L27 domain of PALS1 interacts with the L27 domain of PATJ and the C-terminal L27 domain of PALS1 interacts with the L27 domain of LIN7B. Forms a heterotrimeric complex with DLG1 and CASK via their L27 domains. Interacts with DLG4 and GRIN2B as well as CDH1 and CTNNB1, the channels KCNJ12/Kir2.2, KCNJ4/Kir2.3 and probably KCNJ2/Kir2.1 and SLC6A12/BGT-1 via its PDZ domain. The association of LIN7A with cadherin and beta-catenin is calcium-dependent, occurs at synaptic junctions and requires the actin cytoskeleton. Interacts with EGFR, ERBB2, ERBB3 and ERBB4 with both PDZ and KID domains. Associates with KIF17 via APBA1. Interacts with ASIC3. Interacts with TOPK. Interacts with RTKN. Interacts with APBA1. Interacts with MPP7. Interacts with DLG2. Interacts with DLG3.

It is found in the cell membrane. It localises to the basolateral cell membrane. The protein localises to the cell junction. Its subcellular location is the postsynaptic density membrane. The protein resides in the tight junction. Plays a role in establishing and maintaining the asymmetric distribution of channels and receptors at the plasma membrane of polarized cells. Forms membrane-associated multiprotein complexes that may regulate delivery and recycling of proteins to the correct membrane domains. The tripartite complex composed of LIN7 (LIN7A, LIN7B or LIN7C), CASK and APBA1 associates with the motor protein KIF17 to transport vesicles containing N-methyl-D-aspartate (NMDA) receptor subunit NR2B along microtubules. This complex may have the potential to couple synaptic vesicle exocytosis to cell adhesion in brain. Ensures the proper localization of GRIN2B (subunit 2B of the NMDA receptor) to neuronal postsynaptic density and may function in localizing synaptic vesicles at synapses where it is recruited by beta-catenin and cadherin. Required to localize Kir2 channels, GABA transporter (SLC6A12) and EGFR/ERBB1, ERBB2, ERBB3 and ERBB4 to the basolateral membrane of epithelial cells. May increase the amplitude of ASIC3 acid-evoked currents by stabilizing the channel at the cell surface. In Homo sapiens (Human), this protein is Protein lin-7 homolog B (LIN7B).